A 302-amino-acid polypeptide reads, in one-letter code: 4-hydroxy-tetrahydrodipicolinate synthase (302 aa).

Thr-50 provides a ligand contact to pyruvate. Tyr-138 serves as the catalytic Proton donor/acceptor. Lys-167 functions as the Schiff-base intermediate with substrate in the catalytic mechanism. Residue Val-209 coordinates pyruvate.

This sequence belongs to the DapA family. As to quaternary structure, homotetramer; dimer of dimers.

The protein resides in the cytoplasm. The enzyme catalyses L-aspartate 4-semialdehyde + pyruvate = (2S,4S)-4-hydroxy-2,3,4,5-tetrahydrodipicolinate + H2O + H(+). Its pathway is amino-acid biosynthesis; L-lysine biosynthesis via DAP pathway; (S)-tetrahydrodipicolinate from L-aspartate: step 3/4. Catalyzes the condensation of (S)-aspartate-beta-semialdehyde [(S)-ASA] and pyruvate to 4-hydroxy-tetrahydrodipicolinate (HTPA). The polypeptide is 4-hydroxy-tetrahydrodipicolinate synthase (Salinibacter ruber (strain DSM 13855 / M31)).